A 387-amino-acid polypeptide reads, in one-letter code: MEQVVIVDAIRTPMGRSKGGAFRNVRAEDLSAHLMRSLLARNPALEAAALDDIYWGCVQQTLEQGFNIARNAALLAEVPHSVPAVTVNRLCGSSMQALHDAARMIMTGDAQACLVGGVEHMGHVPMSHGVDFHPGLSRNVAKAAGMMGLTAEMLARMHGISREMQDAFAARSHARAWAATQSAAFKNEIIPTGGHDADGVLKQFNYDEVIRPETTVEALATLRPAFDPVNGTVTAGTSSALSDGAAAMLVMSESRAHELGLKPRARVRSMAVVGCDPSIMGYGPVPASKLALKKAGLSVSDIGVFEMNEAFAAQILPCIKDLGLIEQIDEKINLNGGAIALGHPLGCSGARISTTLLNLMEHKDVQFGLATMCIGLGQGIATVFERV.

The active-site Acyl-thioester intermediate is the Cys-91. Residues His-343 and Cys-373 each act as proton acceptor in the active site.

It belongs to the thiolase-like superfamily. Thiolase family. Heterotetramer of two alpha chains (FadB) and two beta chains (FadA).

The protein resides in the cytoplasm. The enzyme catalyses an acyl-CoA + acetyl-CoA = a 3-oxoacyl-CoA + CoA. Its pathway is lipid metabolism; fatty acid beta-oxidation. Functionally, catalyzes the final step of fatty acid oxidation in which acetyl-CoA is released and the CoA ester of a fatty acid two carbons shorter is formed. This chain is 3-ketoacyl-CoA thiolase, found in Shigella dysenteriae serotype 1 (strain Sd197).